A 297-amino-acid chain; its full sequence is N-acetylneuraminate lyase (297 aa).

Aceneuramate is bound by residues serine 47 and threonine 48. The Proton donor role is filled by tyrosine 137. Lysine 165 functions as the Schiff-base intermediate with substrate in the catalytic mechanism. Residues threonine 167, glycine 189, aspartate 191, glutamate 192, and serine 208 each coordinate aceneuramate.

Belongs to the DapA family. NanA subfamily. As to quaternary structure, homotetramer.

The protein localises to the cytoplasm. It catalyses the reaction aceneuramate = aldehydo-N-acetyl-D-mannosamine + pyruvate. It functions in the pathway amino-sugar metabolism; N-acetylneuraminate degradation; D-fructose 6-phosphate from N-acetylneuraminate: step 1/5. In terms of biological role, catalyzes the reversible aldol cleavage of N-acetylneuraminic acid (sialic acid; Neu5Ac) to form pyruvate and N-acetylmannosamine (ManNAc) via a Schiff base intermediate. The polypeptide is N-acetylneuraminate lyase (Salmonella choleraesuis (strain SC-B67)).